The following is a 252-amino-acid chain: Cell division protein ZapD (252 aa).

It belongs to the ZapD family. As to quaternary structure, interacts with FtsZ.

It localises to the cytoplasm. Its function is as follows. Cell division factor that enhances FtsZ-ring assembly. Directly interacts with FtsZ and promotes bundling of FtsZ protofilaments, with a reduction in FtsZ GTPase activity. The polypeptide is Cell division protein ZapD (Ralstonia pickettii (strain 12J)).